The primary structure comprises 373 residues: Histidinol-phosphate aminotransferase (373 aa).

N6-(pyridoxal phosphate)lysine is present on Lys230.

Belongs to the class-II pyridoxal-phosphate-dependent aminotransferase family. Histidinol-phosphate aminotransferase subfamily. As to quaternary structure, homodimer. Pyridoxal 5'-phosphate serves as cofactor.

It carries out the reaction L-histidinol phosphate + 2-oxoglutarate = 3-(imidazol-4-yl)-2-oxopropyl phosphate + L-glutamate. It functions in the pathway amino-acid biosynthesis; L-histidine biosynthesis; L-histidine from 5-phospho-alpha-D-ribose 1-diphosphate: step 7/9. This chain is Histidinol-phosphate aminotransferase, found in Synechococcus elongatus (strain ATCC 33912 / PCC 7942 / FACHB-805) (Anacystis nidulans R2).